A 358-amino-acid polypeptide reads, in one-letter code: UDP-N-acetylglucosamine--N-acetylmuramyl-(pentapeptide) pyrophosphoryl-undecaprenol N-acetylglucosamine transferase (358 aa).

UDP-N-acetyl-alpha-D-glucosamine contacts are provided by residues 11-13 (TGG), asparagine 120, arginine 161, serine 188, and glutamine 282.

Belongs to the glycosyltransferase 28 family. MurG subfamily.

Its subcellular location is the cell inner membrane. The enzyme catalyses di-trans,octa-cis-undecaprenyl diphospho-N-acetyl-alpha-D-muramoyl-L-alanyl-D-glutamyl-meso-2,6-diaminopimeloyl-D-alanyl-D-alanine + UDP-N-acetyl-alpha-D-glucosamine = di-trans,octa-cis-undecaprenyl diphospho-[N-acetyl-alpha-D-glucosaminyl-(1-&gt;4)]-N-acetyl-alpha-D-muramoyl-L-alanyl-D-glutamyl-meso-2,6-diaminopimeloyl-D-alanyl-D-alanine + UDP + H(+). The protein operates within cell wall biogenesis; peptidoglycan biosynthesis. Cell wall formation. Catalyzes the transfer of a GlcNAc subunit on undecaprenyl-pyrophosphoryl-MurNAc-pentapeptide (lipid intermediate I) to form undecaprenyl-pyrophosphoryl-MurNAc-(pentapeptide)GlcNAc (lipid intermediate II). The protein is UDP-N-acetylglucosamine--N-acetylmuramyl-(pentapeptide) pyrophosphoryl-undecaprenol N-acetylglucosamine transferase of Synechococcus sp. (strain CC9605).